Reading from the N-terminus, the 214-residue chain is Dynein axonemal assembly factor 6 (214 aa).

Disordered regions lie at residues Met1–Asp22 and Ala34–Pro68.

It belongs to the PIH1 family. In terms of assembly, interacts with HSPA1A/B and HSP90AA1. Interacts with DNAAF2 and DNAAF4. Interacts wuth DNAI2. In terms of tissue distribution, expressed in testis, small intestine, prostate, adrenal gland, spleen, lung, bladder, breast and ovary. Expressed in ciliated epithelial cells.

It is found in the cytoplasm. Its subcellular location is the golgi apparatus. The protein localises to the trans-Golgi network. Functionally, plays a role in cytoplasmic pre-assembly of axonemal dynein. The chain is Dynein axonemal assembly factor 6 from Homo sapiens (Human).